Here is a 355-residue protein sequence, read N- to C-terminus: Neutral protease 2 homolog AFUB_100460 (355 aa).

A signal peptide spans 1–19 (MKITALASAILAVAQGALA). Positions 20–172 (LPARAPALDI…PASIKPLDRR (153 aa)) are excised as a propeptide. Cystine bridges form between C179–C251 and C258–C276. H300 is a Zn(2+) binding site. Residue E301 is part of the active site. H304 and D315 together coordinate Zn(2+).

This sequence belongs to the peptidase M35 family. It depends on Zn(2+) as a cofactor.

The protein resides in the secreted. The enzyme catalyses Preferential cleavage of bonds with hydrophobic residues in P1'. Also 3-Asn-|-Gln-4 and 8-Gly-|-Ser-9 bonds in insulin B chain.. Secreted metalloproteinase that allows assimilation of proteinaceous substrates. Shows high activities on basic nuclear substrates such as histone and protamine. May be involved in virulence. The polypeptide is Neutral protease 2 homolog AFUB_100460 (Aspergillus fumigatus (strain CBS 144.89 / FGSC A1163 / CEA10) (Neosartorya fumigata)).